The following is a 367-amino-acid chain: DNA replication and repair protein RecF (367 aa).

30–37 (GANGSGKT) lines the ATP pocket.

Belongs to the RecF family.

The protein localises to the cytoplasm. Functionally, the RecF protein is involved in DNA metabolism; it is required for DNA replication and normal SOS inducibility. RecF binds preferentially to single-stranded, linear DNA. It also seems to bind ATP. The chain is DNA replication and repair protein RecF from Pseudomonas putida (strain GB-1).